The primary structure comprises 280 residues: MIKAKKHFGQNFLQDKATLDKIIQAIPKDVENVVEIGPGLGDLTFRLLQIYKTTSFEIDRELFQILKVKFANEIQNGQLKLFCKDALEQWQQEGGLSSENYFLVANLPYYVATKMILNAIDDEKCLGLIVMIQKEVALKFSAKSKDKEFSALSILASLQGRCELLFDVDAKLFNPPPKVTSSVIKLQKTKKIFGKDGIFKDAKQYEAFKAFLRAAFASPRKTLLKNLSTNFDKKALEEIFENMNLATNLRPHELDVDSYLKIFEITKEDNERQKRRESCN.

Residues asparagine 11, leucine 13, glycine 37, glutamate 57, aspartate 85, and asparagine 106 each contribute to the S-adenosyl-L-methionine site.

This sequence belongs to the class I-like SAM-binding methyltransferase superfamily. rRNA adenine N(6)-methyltransferase family. RsmA subfamily.

The protein resides in the cytoplasm. It catalyses the reaction adenosine(1518)/adenosine(1519) in 16S rRNA + 4 S-adenosyl-L-methionine = N(6)-dimethyladenosine(1518)/N(6)-dimethyladenosine(1519) in 16S rRNA + 4 S-adenosyl-L-homocysteine + 4 H(+). Specifically dimethylates two adjacent adenosines (A1518 and A1519) in the loop of a conserved hairpin near the 3'-end of 16S rRNA in the 30S particle. May play a critical role in biogenesis of 30S subunits. In Campylobacter concisus (strain 13826), this protein is Ribosomal RNA small subunit methyltransferase A.